Here is a 680-residue protein sequence, read N- to C-terminus: DNA-directed RNA polymerase subunit beta' (680 aa).

4 residues coordinate Zn(2+): Cys-69, Cys-71, Cys-87, and Cys-90. Mg(2+)-binding residues include Asp-489, Asp-491, and Asp-493.

Belongs to the RNA polymerase beta' chain family. RpoC1 subfamily. In terms of assembly, in plastids the minimal PEP RNA polymerase catalytic core is composed of four subunits: alpha, beta, beta', and beta''. When a (nuclear-encoded) sigma factor is associated with the core the holoenzyme is formed, which can initiate transcription. Mg(2+) is required as a cofactor. Zn(2+) serves as cofactor.

It is found in the plastid. Its subcellular location is the chloroplast. It carries out the reaction RNA(n) + a ribonucleoside 5'-triphosphate = RNA(n+1) + diphosphate. DNA-dependent RNA polymerase catalyzes the transcription of DNA into RNA using the four ribonucleoside triphosphates as substrates. The chain is DNA-directed RNA polymerase subunit beta' from Carica papaya (Papaya).